The primary structure comprises 648 residues: MLGLTEAEKIKICLQKQVNSSFSLHNGFGGNLYATEEKRMFELVKPKAGASVLNQSTWIGFGDSRTDQSNSAFPRSADVSAKTADKFRSLSGGSLMLSMFGPPGKVDYLYQGCGKHKVFYEGVNWSPHAAIDCYRKNWTDIKLNFQKSIYELASQSHCMSLVNALDKTIPLQVTKGVAKNCNNSFLKNPALYTQEVKPLEQICGKENLAFFTLPTQFGTYECKLHLVASCYFIYDSKEVYNKRGCGNYFQVIYDSSGKVVGGLDNRVSPYTGNSGDTPTMQCDMLQLKPGRYSVRSSPRFLLMPERSYCFDMKEKGPVTAVQSIWGKGRESDYAVDQACLSTPGCMLIQKQKPYIGEADDHHGDQEMRELLSGLDYEARCISQSGWVNETSPFTEEYLLPPKFGRCPLAAKEESIPKIPDGLLIPTSGTDTTVTKPKSRIFGIDDLIIGLLFVAIVEAGIGGYLLGSRKESGGGVTKESAEKGFEKIGNDIQILRSSTNIAIEKLNDRISHDEQAIRDLTLEIENARSEALLGELGIIRALLVGNISIGLQESLWELASEITNRAGDLAVEVSPGCWIIDNNICDQSCQNFIFKFNETAPVPTIPPLDTKIDLQSDPFYWGSSLGLAITAAISLAALVISGIAICRTK.

Positions 1–7 (MLGLTEA) are cleaved as a signal peptide. The interval 8-33 (EKIKICLQKQVNSSFSLHNGFGGNLY) is fusion domain-1. Residues 8–623 (EKIKICLQKQ…QSDPFYWGSS (616 aa)) are Extracellular-facing. 4 disulfides stabilise this stretch: C13/C576, C203/C245, C222/C309, and C230/C282. 2 N-linked (GlcNAc...) asparagine; by host glycosylation sites follow: N19 and N54. Residues 34–151 (ATEEKRMFEL…KLNFQKSIYE (118 aa)) are esterase domain-1. S64 acts as the Nucleophile in catalysis. Residues N137 and N182 are each glycosylated (N-linked (GlcNAc...) asparagine; by host). Residues 151-303 (ELASQSHCMS…VRSSPRFLLM (153 aa)) form an N-acetyl-9-O-acetylneuraminic acid binding region. The segment at 303 to 357 (MPERSYCFDMKEKGPVTAVQSIWGKGRESDYAVDQACLSTPGCMLIQKQKPYIGE) is esterase domain-2. The tract at residues 358-643 (ADDHHGDQEM…LAALVISGIA (286 aa)) is fusion domain-2. Catalysis depends on charge relay system residues D359 and H362. Residues N388, N545, and N596 are each glycosylated (N-linked (GlcNAc...) asparagine; by host). Residues 624–644 (LGLAITAAISLAALVISGIAI) form a helical membrane-spanning segment. Over 645 to 648 (CRTK) the chain is Cytoplasmic.

It belongs to the influenza viruses hemagglutinin family. Homotrimer of disulfide-linked HEF1-HEF2. In natural infection, inactive HEF is matured into HEF1 and HEF2 outside the cell by one or more trypsin-like, arginine-specific endoprotease.

It localises to the virion membrane. The protein resides in the host cell membrane. The catalysed reaction is N-acetyl-9-O-acetylneuraminate + H2O = N-acetylneuraminate + acetate + H(+). It carries out the reaction N-acetyl-4-O-acetylneuraminate + H2O = N-acetylneuraminate + acetate + H(+). Functionally, binds to the N-acetyl-9-O-acetylneuraminic acid residues on the cell surface, bringing about the attachment of the virus particle to the cell. Plays a major role in the determination of host range restriction and virulence. Class I viral fusion protein. Responsible for penetration of the virus into the cell cytoplasm by mediating the fusion of the membrane of the endocytosed virus particle with the endosomal membrane. Low pH in endosomes induce an irreversible conformational change in HEF2, releasing the fusion hydrophobic peptide. Several trimers are required to form a competent fusion pore. Displays a receptor-destroying activity which is a neuraminidate-O-acetyl esterase. This activity cleaves off any receptor on the cell surface, which would otherwise prevent virions release. These cleavages prevent self-aggregation and ensure the efficient spread of the progeny virus from cell to cell. This is Hemagglutinin-esterase-fusion glycoprotein from Homo sapiens (Human).